We begin with the raw amino-acid sequence, 914 residues long: MINSLLTRLFGSRNERQLRQLNSIVAKINALETELQKLSDTALQAKTTEFKQSIQDGKSLDKLLPEAFAVCREASRRVLGMRHYDVQLIGGMVLHLGKIAEMRTGEGKTLVATLPVYLNALAGNGVHVVTVNDYLARRDAAHMGRLYNWLGLSVGVVYPGMPHSDKHAAYGADITYGTNNEFGFDYLRDNMALSKADRYQRGLHYAIVDEVDSILIDEARTPLIISGPADESPDLYIRVNRIIPHLTRQENEEAEGDYWVDEKGKQVHLSEVGMERAEELLHQAGILGEEDDSLYAAQNLSVVHHLNAALRAHALYQRDVDYIVRDGEVVIVDEFTGRTLAGRRWSDGLHQAIEAKEGVPVQRENQTLASITFQNLFRIYKKLSGMTGTADTEAYEFQSIYGLEVMVIPTNRPTVRKDYPDQVFLNRSSKFNAVLEDIKDCAQRGQPVLVGTTSIEISEMLSEHLRKAKVKHEVLNAKQHEREATIVANAGLPGAVTIATNMAGRGTDIVLGGSLDTVLAELDPDATEEDRFRVKTAWNRRHEAVKAAGGLHIIGTERHESRRIDNQLRGRAGRQGDPGSSRFYLSLEDSLMRIFASEWVQKVMRLMGMKEGDVIEDRRVTRQIERAQRKVEAHNFDIRKNLLDYDDVNNEQRKVVYAQRDELLDAESIKENIDSIRHEVIDALVTRFVPEHSIDEQWDLPGLQATLQSEWGLHLPLIEMLKGREEVDAERIAFLVQDAVDKHCAEREASIGAETMRALEKHVMLTVLDQGWKEHLATMDYLRQGIHLRGYAQKQPKQEYKREAFELFSEMLEHVKREVIASLARVRIRSEEEMAALEEQERRQVDTLLRQSQFQHQEAGGYGTGDEAVSLQRQLAGQGAAIAQVIRDTPKVGRNDPCPCGSGKKYKHCHGLVT.

ATP is bound by residues Gln87, 105 to 109, and Asp508; that span reads GEGKT. Cys898, Cys900, Cys909, and His910 together coordinate Zn(2+).

The protein belongs to the SecA family. Monomer and homodimer. Part of the essential Sec protein translocation apparatus which comprises SecA, SecYEG and auxiliary proteins SecDF-YajC and YidC. Zn(2+) is required as a cofactor.

It is found in the cell inner membrane. It localises to the cytoplasm. The enzyme catalyses ATP + H2O + cellular proteinSide 1 = ADP + phosphate + cellular proteinSide 2.. Part of the Sec protein translocase complex. Interacts with the SecYEG preprotein conducting channel. Has a central role in coupling the hydrolysis of ATP to the transfer of proteins into and across the cell membrane, serving both as a receptor for the preprotein-SecB complex and as an ATP-driven molecular motor driving the stepwise translocation of polypeptide chains across the membrane. The protein is Protein translocase subunit SecA of Xylella fastidiosa (strain 9a5c).